Here is a 714-residue protein sequence, read N- to C-terminus: ABC transporter B family member 28 (714 aa).

A run of 5 helical transmembrane segments spans residues 109 to 129, 161 to 181, 240 to 260, 340 to 360, and 361 to 381; these read LSVC…MPVF, IFTI…MAIL, ICIL…LMLA, VAVY…VKTG, and ELAV…TFAV. In terms of domain architecture, ABC transmembrane type-1 spans 109–393; the sequence is LSVCLLTLLG…LVNTFGDLRG (285 aa). In terms of domain architecture, ABC transporter spans 470–708; the sequence is VCLDDVHFAY…KGSYASLVGT (239 aa). 505–512 serves as a coordination point for ATP; the sequence is GSSGAGKS.

The protein belongs to the ABC transporter superfamily. ABCB family. Multidrug resistance exporter (TC 3.A.1.201) subfamily.

The protein localises to the membrane. This is ABC transporter B family member 28 (ABCB28) from Arabidopsis thaliana (Mouse-ear cress).